The chain runs to 428 residues: Cyclic AMP-responsive element-binding protein 3-like protein 4 (428 aa).

The required for transcriptional activation stretch occupies residues 1 to 68; the sequence is MLLGSLFEQT…EFLQMMINPN (68 aa). Topologically, residues 1–294 are cytoplasmic; it reads MLLGSLFEQT…QTSNKAAQTS (294 aa). A disordered region spans residues 71–111; that stretch reads YSTGPAAAESPESDSGFSDDPRPDTPPQSETSPPLPQPTPV. In terms of domain architecture, bZIP spans 216 to 279; it reads ILKKVRRKIR…ISLITQLRKL (64 aa). A basic motif region spans residues 218–247; sequence KKVRRKIRNKQSAQDSRRRKKEYIDGLESR. Residues 258–279 form a leucine-zipper region; sequence LHKKVVELEKHNISLITQLRKL. The helical; Signal-anchor for type II membrane protein transmembrane segment at 295-315 threads the bilayer; it reads TCVLILLFSLALLVFPSYSPF. Residues 316–428 lie on the Lumenal side of the membrane; the sequence is RSRPSASQED…LSKTARADEM (113 aa). The segment at 339-428 is disordered; the sequence is NKGGFSEVAD…LSKTARADEM (90 aa). Over residues 354-368 the composition is skewed to basic and acidic residues; the sequence is TLHRAQQREEGDPGR. A glycan (N-linked (GlcNAc...) asparagine) is linked at N418.

This sequence belongs to the bZIP family. ATF subfamily. Binds DNA as a dimer. Controlled by regulated intramembrane proteolysis (RIP). A fragment containing the cytoplasmic transcription factor domain is released by proteolysis. The cleavage seems to be performed sequentially by site-1 and site-2 proteases (PS1 and PS2).

The protein resides in the endoplasmic reticulum membrane. The protein localises to the nucleus. In terms of biological role, transcriptional activator. This is Cyclic AMP-responsive element-binding protein 3-like protein 4 (creb3l4) from Xenopus tropicalis (Western clawed frog).